Here is a 313-residue protein sequence, read N- to C-terminus: Ribosomal RNA small subunit methyltransferase H (313 aa).

Residues 31–33, Asp-51, Phe-77, Asp-95, and Gln-102 each bind S-adenosyl-L-methionine; that span reads GGH.

The protein belongs to the methyltransferase superfamily. RsmH family.

The protein resides in the cytoplasm. It catalyses the reaction cytidine(1402) in 16S rRNA + S-adenosyl-L-methionine = N(4)-methylcytidine(1402) in 16S rRNA + S-adenosyl-L-homocysteine + H(+). Functionally, specifically methylates the N4 position of cytidine in position 1402 (C1402) of 16S rRNA. This Xylella fastidiosa (strain M12) protein is Ribosomal RNA small subunit methyltransferase H.